The sequence spans 414 residues: MGGNHSHKPPVFDENEEVNFDHFQILRAIGKGSFGKVCIVQKRDTKKMYAMKYMNKQKCIERDEVRNVFRELQIMQGLEHPFLVNLWYSFQDEEDMFMVVDLLLGGDLRYHLQQNVHFTEGTVKLYICELALALEYLQRYHIIHRDIKPDNILLDEHGHVHITDFNIATVVKGAERASSMAGTKPYMAPEVFQVYMDRGPGYSYPVDWWSLGITAYELLRGWRPYEIHSVTPIDEILNMFKVERVHYSSTWCKGMVALLRKLLTKDPESRVSSLHDIQSVPYLADMNWDAVFKKALMPGFVPNKGRLNCDPTFELEEMILESKPLHKKKKRLAKNRSRDGTKDSCPLNGHLQHCLETVREEFIIFNREKLRRQQGQGSQLLDTDSRGGGQAQSKLQDGCNNNLLTHTCTRGCSS.

Positions 23–283 (FQILRAIGKG…LHDIQSVPYL (261 aa)) constitute a Protein kinase domain. Residues 29 to 37 (IGKGSFGKV) and K52 contribute to the ATP site. The active-site Proton acceptor is D146. Residues 374–396 (QGQGSQLLDTDSRGGGQAQSKLQ) form a disordered region.

The protein belongs to the protein kinase superfamily. Ser/Thr protein kinase family. Requires Mg(2+) as cofactor.

It catalyses the reaction L-seryl-[protein] + ATP = O-phospho-L-seryl-[protein] + ADP + H(+). The catalysed reaction is L-threonyl-[protein] + ATP = O-phospho-L-threonyl-[protein] + ADP + H(+). The chain is Serine/threonine-protein kinase 32B from Homo sapiens (Human).